Here is a 179-residue protein sequence, read N- to C-terminus: Large ribosomal subunit protein uL5 (179 aa).

It belongs to the universal ribosomal protein uL5 family. As to quaternary structure, part of the 50S ribosomal subunit; part of the 5S rRNA/L5/L18/L25 subcomplex. Contacts the 5S rRNA and the P site tRNA. Forms a bridge to the 30S subunit in the 70S ribosome.

In terms of biological role, this is one of the proteins that bind and probably mediate the attachment of the 5S RNA into the large ribosomal subunit, where it forms part of the central protuberance. In the 70S ribosome it contacts protein S13 of the 30S subunit (bridge B1b), connecting the 2 subunits; this bridge is implicated in subunit movement. Contacts the P site tRNA; the 5S rRNA and some of its associated proteins might help stabilize positioning of ribosome-bound tRNAs. The polypeptide is Large ribosomal subunit protein uL5 (Geobacillus kaustophilus (strain HTA426)).